We begin with the raw amino-acid sequence, 107 residues long: Integration host factor subunit beta (107 aa).

The segment at 56-107 (RPARVGRNPKSGEKVQVPEKFVPHFKPGKELRERVDGRAGEPLKADDPDDER) is disordered. Over residues 82-101 (PGKELRERVDGRAGEPLKAD) the composition is skewed to basic and acidic residues.

Belongs to the bacterial histone-like protein family. Heterodimer of an alpha and a beta chain.

This protein is one of the two subunits of integration host factor, a specific DNA-binding protein that functions in genetic recombination as well as in transcriptional and translational control. The polypeptide is Integration host factor subunit beta (Burkholderia vietnamiensis (strain G4 / LMG 22486) (Burkholderia cepacia (strain R1808))).